Consider the following 203-residue polypeptide: Na(+)-translocating NADH-quinone reductase subunit E (203 aa).

The next 6 helical transmembrane spans lie at 11-31 (SIFI…FLAV), 35-55 (ISTA…TVPL), 82-102 (FLGL…LEMF), 115-135 (GIFL…LFMV), 145-165 (MVYG…MAGV), and 181-201 (LGIT…FSGI).

It belongs to the NqrDE/RnfAE family. In terms of assembly, composed of six subunits; NqrA, NqrB, NqrC, NqrD, NqrE and NqrF.

The protein resides in the cell inner membrane. The catalysed reaction is a ubiquinone + n Na(+)(in) + NADH + H(+) = a ubiquinol + n Na(+)(out) + NAD(+). Functionally, NQR complex catalyzes the reduction of ubiquinone-1 to ubiquinol by two successive reactions, coupled with the transport of Na(+) ions from the cytoplasm to the periplasm. NqrA to NqrE are probably involved in the second step, the conversion of ubisemiquinone to ubiquinol. This Dichelobacter nodosus (strain VCS1703A) protein is Na(+)-translocating NADH-quinone reductase subunit E.